The sequence spans 249 residues: Imidazole glycerol phosphate synthase subunit HisF (249 aa).

Catalysis depends on residues aspartate 11 and aspartate 130.

Belongs to the HisA/HisF family. Heterodimer of HisH and HisF.

The protein resides in the cytoplasm. The enzyme catalyses 5-[(5-phospho-1-deoxy-D-ribulos-1-ylimino)methylamino]-1-(5-phospho-beta-D-ribosyl)imidazole-4-carboxamide + L-glutamine = D-erythro-1-(imidazol-4-yl)glycerol 3-phosphate + 5-amino-1-(5-phospho-beta-D-ribosyl)imidazole-4-carboxamide + L-glutamate + H(+). The protein operates within amino-acid biosynthesis; L-histidine biosynthesis; L-histidine from 5-phospho-alpha-D-ribose 1-diphosphate: step 5/9. Its function is as follows. IGPS catalyzes the conversion of PRFAR and glutamine to IGP, AICAR and glutamate. The HisF subunit catalyzes the cyclization activity that produces IGP and AICAR from PRFAR using the ammonia provided by the HisH subunit. The protein is Imidazole glycerol phosphate synthase subunit HisF of Exiguobacterium sibiricum (strain DSM 17290 / CCUG 55495 / CIP 109462 / JCM 13490 / 255-15).